A 131-amino-acid chain; its full sequence is Small ribosomal subunit protein uS8c (131 aa).

Belongs to the universal ribosomal protein uS8 family. Part of the 30S ribosomal subunit.

It localises to the plastid. It is found in the chloroplast. Its function is as follows. One of the primary rRNA binding proteins, it binds directly to 16S rRNA central domain where it helps coordinate assembly of the platform of the 30S subunit. In Phalaenopsis aphrodite subsp. formosana (Moth orchid), this protein is Small ribosomal subunit protein uS8c (rps8).